Here is a 150-residue protein sequence, read N- to C-terminus: Transcriptional regulator MraZ (150 aa).

2 SpoVT-AbrB domains span residues phenylalanine 8–histidine 55 and alanine 84–asparagine 127.

This sequence belongs to the MraZ family. Forms oligomers.

It localises to the cytoplasm. The protein resides in the nucleoid. This Rickettsia bellii (strain OSU 85-389) protein is Transcriptional regulator MraZ.